We begin with the raw amino-acid sequence, 45 residues long: Mu-conotoxin-like Cal 12.1.2g (45 aa).

4 disulfides stabilise this stretch: C3/C16, C11/C28, C18/C33, and C27/C39. Residue P23 is modified to 4-hydroxyproline. 6'-bromotryptophan occurs at positions 37 and 38. The residue at position 40 (P40) is a 4-hydroxyproline.

Expressed by the venom duct.

It is found in the secreted. Mu-conotoxins block voltage-gated sodium channels. This toxin reversibly blocks voltage-gated sodium channel in cephalopods, with no alteration in the voltage dependence of sodium conductance or on the kinetics of inactivation. This chain is Mu-conotoxin-like Cal 12.1.2g, found in Californiconus californicus (California cone).